Reading from the N-terminus, the 590-residue chain is Aspartate--tRNA(Asp/Asn) ligase (590 aa).

L-aspartate is bound at residue glutamate 172. Residues 196–199 (QLFK) form an aspartate region. Arginine 218 contributes to the L-aspartate binding site. Residues 218-220 (RDE) and glutamine 227 contribute to the ATP site. Residue histidine 449 participates in L-aspartate binding. Glutamate 484 provides a ligand contact to ATP. Position 491 (arginine 491) interacts with L-aspartate. 536-539 (GVDR) is a binding site for ATP.

Belongs to the class-II aminoacyl-tRNA synthetase family. Type 1 subfamily. As to quaternary structure, homodimer.

It is found in the cytoplasm. It carries out the reaction tRNA(Asx) + L-aspartate + ATP = L-aspartyl-tRNA(Asx) + AMP + diphosphate. Aspartyl-tRNA synthetase with relaxed tRNA specificity since it is able to aspartylate not only its cognate tRNA(Asp) but also tRNA(Asn). Reaction proceeds in two steps: L-aspartate is first activated by ATP to form Asp-AMP and then transferred to the acceptor end of tRNA(Asp/Asn). The sequence is that of Aspartate--tRNA(Asp/Asn) ligase from Francisella tularensis subsp. tularensis (strain WY96-3418).